The chain runs to 393 residues: Protein shisa-9B (393 aa).

Residues 1–20 (MKSTGLLLGYFLMKVLVCDA) form the signal peptide. Residues 21–131 (EGEPGKSLDG…MDQHDPTKDK (111 aa)) are Extracellular-facing. The interval 28–52 (LDGAVTASGSNDSRDGENGLSETPH) is disordered. N-linked (GlcNAc...) asparagine glycosylation is present at Asn-38. Residues 132 to 152 (TNLIVYIICGVVAIMALVGIF) traverse the membrane as a helical segment. The Cytoplasmic segment spans residues 153–393 (TKLGLEKAHR…VTNSKTEVTV (241 aa)). The disordered stretch occupies residues 307–340 (QKQNGHKSKSTKVHSSHPLAYGSNTIANPGRMSS). Basic residues predominate over residues 310-321 (NGHKSKSTKVHS).

The protein belongs to the shisa family. SHISA9 subfamily. In terms of assembly, component of some AMPA receptors (ionotropic glutamate receptors) complex.

The protein resides in the cell projection. The protein localises to the dendritic spine membrane. It is found in the synapse. In terms of biological role, regulator of short-term neuronal synaptic plasticity in the dentate gyrus. Associates with AMPA receptors (ionotropic glutamate receptors) in synaptic spines and promotes AMPA receptor desensitization at excitatory synapses. This is Protein shisa-9B (shisa9b) from Danio rerio (Zebrafish).